Consider the following 219-residue polypeptide: 2-hydroxy-3-keto-5-methylthiopentenyl-1-phosphate phosphatase (219 aa).

The protein belongs to the HAD-like hydrolase superfamily. MtnX family.

The enzyme catalyses 2-hydroxy-5-methylsulfanyl-3-oxopent-1-enyl phosphate + H2O = 1,2-dihydroxy-5-(methylsulfanyl)pent-1-en-3-one + phosphate. The protein operates within amino-acid biosynthesis; L-methionine biosynthesis via salvage pathway; L-methionine from S-methyl-5-thio-alpha-D-ribose 1-phosphate: step 4/6. Dephosphorylates 2-hydroxy-3-keto-5-methylthiopentenyl-1-phosphate (HK-MTPenyl-1-P) yielding 1,2-dihydroxy-3-keto-5-methylthiopentene (DHK-MTPene). This is 2-hydroxy-3-keto-5-methylthiopentenyl-1-phosphate phosphatase from Bacillus mycoides (strain KBAB4) (Bacillus weihenstephanensis).